The following is a 118-amino-acid chain: Phosphoribosyl-AMP cyclohydrolase (118 aa).

D85 contacts Mg(2+). Residue C86 participates in Zn(2+) binding. Positions 87 and 89 each coordinate Mg(2+). C102 and C109 together coordinate Zn(2+).

This sequence belongs to the PRA-CH family. As to quaternary structure, homodimer. Requires Mg(2+) as cofactor. The cofactor is Zn(2+).

It is found in the cytoplasm. It carries out the reaction 1-(5-phospho-beta-D-ribosyl)-5'-AMP + H2O = 1-(5-phospho-beta-D-ribosyl)-5-[(5-phospho-beta-D-ribosylamino)methylideneamino]imidazole-4-carboxamide. It functions in the pathway amino-acid biosynthesis; L-histidine biosynthesis; L-histidine from 5-phospho-alpha-D-ribose 1-diphosphate: step 3/9. Functionally, catalyzes the hydrolysis of the adenine ring of phosphoribosyl-AMP. The chain is Phosphoribosyl-AMP cyclohydrolase from Sulfurisphaera tokodaii (strain DSM 16993 / JCM 10545 / NBRC 100140 / 7) (Sulfolobus tokodaii).